We begin with the raw amino-acid sequence, 89 residues long: uncharacterized protein (89 aa).

A run of 2 helical transmembrane segments spans residues 11–31 (IFGAVILVSMIGALVAEPIAL) and 63–83 (AAISAALGPAGLASGVFTVVF).

It is found in the cell membrane. This is an uncharacterized protein from Methanocaldococcus jannaschii (strain ATCC 43067 / DSM 2661 / JAL-1 / JCM 10045 / NBRC 100440) (Methanococcus jannaschii).